A 258-amino-acid polypeptide reads, in one-letter code: MATLINFNDTNKLLLTKQPSLFIDLASKDWIASANQAIKQRGAFYVALSGGKTPLEIYKDIVINKDKLIDPSKIFLFWGDERLAPITSSESNYGQAMSILRDLNIPDEQIFRMETENPDGAKKYQELIENKIPDASFDMIMLGLGEDGHTLSLFSNTSALEEENDLVVFNSVPHLETERMTLTFPCVHKGKHVVVYVQGENKKPILKSVFFSEGREEKLYPIERVGRDRSPLFWIISPESYDIADFDNISSIYKMDIL.

It belongs to the glucosamine/galactosamine-6-phosphate isomerase family. 6-phosphogluconolactonase subfamily.

The catalysed reaction is 6-phospho-D-glucono-1,5-lactone + H2O = 6-phospho-D-gluconate + H(+). It participates in carbohydrate degradation; pentose phosphate pathway; D-ribulose 5-phosphate from D-glucose 6-phosphate (oxidative stage): step 2/3. In terms of biological role, hydrolysis of 6-phosphogluconolactone to 6-phosphogluconate. In Chlamydia pneumoniae (Chlamydophila pneumoniae), this protein is 6-phosphogluconolactonase (pgl).